The following is a 471-amino-acid chain: ATP synthase subunit beta (471 aa).

An ATP-binding site is contributed by 152–159 (GGAGVGKT).

This sequence belongs to the ATPase alpha/beta chains family. In terms of assembly, F-type ATPases have 2 components, CF(1) - the catalytic core - and CF(0) - the membrane proton channel. CF(1) has five subunits: alpha(3), beta(3), gamma(1), delta(1), epsilon(1). CF(0) has three main subunits: a(1), b(2) and c(9-12). The alpha and beta chains form an alternating ring which encloses part of the gamma chain. CF(1) is attached to CF(0) by a central stalk formed by the gamma and epsilon chains, while a peripheral stalk is formed by the delta and b chains.

It localises to the cell membrane. It catalyses the reaction ATP + H2O + 4 H(+)(in) = ADP + phosphate + 5 H(+)(out). Functionally, produces ATP from ADP in the presence of a proton gradient across the membrane. The catalytic sites are hosted primarily by the beta subunits. This is ATP synthase subunit beta from Herpetosiphon aurantiacus (strain ATCC 23779 / DSM 785 / 114-95).